The primary structure comprises 110 residues: Cytochrome c oxidase subunit 4B (110 aa).

3 helical membrane passes run 29-49 (MIAF…VGYE), 55-75 (FVVP…LYYF), and 89-109 (FIYG…TVVW).

It belongs to the cytochrome c oxidase bacterial subunit 4 family.

The protein resides in the cell membrane. It carries out the reaction 4 Fe(II)-[cytochrome c] + O2 + 8 H(+)(in) = 4 Fe(III)-[cytochrome c] + 2 H2O + 4 H(+)(out). The protein is Cytochrome c oxidase subunit 4B (caaD) of Bacillus sp. (strain PS3).